We begin with the raw amino-acid sequence, 452 residues long: Phosphatidate cytidylyltransferase, mitochondrial (452 aa).

The protein belongs to the TAM41 family. The cofactor is Mg(2+).

The protein resides in the mitochondrion inner membrane. It carries out the reaction a 1,2-diacyl-sn-glycero-3-phosphate + CTP + H(+) = a CDP-1,2-diacyl-sn-glycerol + diphosphate. It participates in phospholipid metabolism; CDP-diacylglycerol biosynthesis; CDP-diacylglycerol from sn-glycerol 3-phosphate: step 3/3. Its function is as follows. Catalyzes the conversion of phosphatidic acid (PA) to CDP-diacylglycerol (CDP-DAG), an essential intermediate in the synthesis of phosphatidylglycerol, cardiolipin and phosphatidylinositol. This is Phosphatidate cytidylyltransferase, mitochondrial (TAMM41) from Homo sapiens (Human).